The sequence spans 386 residues: Succinyl-diaminopimelate desuccinylase (386 aa).

H72 contacts Zn(2+). The active site involves D74. D105 lines the Zn(2+) pocket. E139 functions as the Proton acceptor in the catalytic mechanism. 3 residues coordinate Zn(2+): E140, E168, and H353.

The protein belongs to the peptidase M20A family. DapE subfamily. In terms of assembly, homodimer. The cofactor is Zn(2+). Co(2+) is required as a cofactor.

The catalysed reaction is N-succinyl-(2S,6S)-2,6-diaminopimelate + H2O = (2S,6S)-2,6-diaminopimelate + succinate. It functions in the pathway amino-acid biosynthesis; L-lysine biosynthesis via DAP pathway; LL-2,6-diaminopimelate from (S)-tetrahydrodipicolinate (succinylase route): step 3/3. In terms of biological role, catalyzes the hydrolysis of N-succinyl-L,L-diaminopimelic acid (SDAP), forming succinate and LL-2,6-diaminopimelate (DAP), an intermediate involved in the bacterial biosynthesis of lysine and meso-diaminopimelic acid, an essential component of bacterial cell walls. In Rhodospirillum centenum (strain ATCC 51521 / SW), this protein is Succinyl-diaminopimelate desuccinylase.